Consider the following 128-residue polypeptide: Large ribosomal subunit protein bL20 (128 aa).

This sequence belongs to the bacterial ribosomal protein bL20 family.

Functionally, binds directly to 23S ribosomal RNA and is necessary for the in vitro assembly process of the 50S ribosomal subunit. It is not involved in the protein synthesizing functions of that subunit. This Kocuria rhizophila (strain ATCC 9341 / DSM 348 / NBRC 103217 / DC2201) protein is Large ribosomal subunit protein bL20.